Consider the following 516-residue polypeptide: GMP synthase [glutamine-hydrolyzing] (516 aa).

The region spanning 5-199 is the Glutamine amidotransferase type-1 domain; that stretch reads SIIVLDFGSQ…ARNICGVTEK (195 aa). Cys-82 functions as the Nucleophile in the catalytic mechanism. Active-site residues include His-173 and Glu-175. The region spanning 200–391 is the GMPS ATP-PPase domain; the sequence is WKMEHFLKEQ…LGLPESMINR (192 aa). 227 to 233 provides a ligand contact to ATP; the sequence is SGGVDSS.

As to quaternary structure, homodimer.

It catalyses the reaction XMP + L-glutamine + ATP + H2O = GMP + L-glutamate + AMP + diphosphate + 2 H(+). The protein operates within purine metabolism; GMP biosynthesis; GMP from XMP (L-Gln route): step 1/1. In terms of biological role, catalyzes the synthesis of GMP from XMP. The polypeptide is GMP synthase [glutamine-hydrolyzing] (Sulfurimonas denitrificans (strain ATCC 33889 / DSM 1251) (Thiomicrospira denitrificans (strain ATCC 33889 / DSM 1251))).